A 105-amino-acid chain; its full sequence is Ferredoxin (105 aa).

[3Fe-4S] cluster-binding residues include cysteine 8 and cysteine 16. Residues cysteine 20, cysteine 39, cysteine 42, and cysteine 45 each coordinate [4Fe-4S] cluster. In terms of domain architecture, 4Fe-4S ferredoxin-type spans 30–59 (RSLYIHPDECVDCGACEPVCPVEAIFYEDD). Cysteine 49 contributes to the [3Fe-4S] cluster binding site.

[4Fe-4S] cluster is required as a cofactor. It depends on [3Fe-4S] cluster as a cofactor.

Its function is as follows. Ferredoxins are iron-sulfur proteins that transfer electrons in a wide variety of metabolic reactions. Functionally, putative electron transport protein for the cytochrome P-450SOY system from the same organism. In Streptomyces griseus, this protein is Ferredoxin.